A 150-amino-acid polypeptide reads, in one-letter code: Putative HTH-type transcriptional regulator HI_0379 (150 aa).

The HTH rrf2-type domain occupies 2–131 (KLTSKGRYAV…NEITLAELVN (130 aa)).

The polypeptide is Putative HTH-type transcriptional regulator HI_0379 (Haemophilus influenzae (strain ATCC 51907 / DSM 11121 / KW20 / Rd)).